The primary structure comprises 95 residues: DNA-binding protein CENSYa_1764 (95 aa).

Residues 1–21 form a disordered region; it reads MSYTDPDDSLPEHVPGEAEMS.

The protein belongs to the PDCD5 family.

This chain is DNA-binding protein CENSYa_1764, found in Cenarchaeum symbiosum (strain A).